A 45-amino-acid polypeptide reads, in one-letter code: Mu-conotoxin-like Cal 12.1.2d (45 aa).

Cystine bridges form between cysteine 3–cysteine 16, cysteine 11–cysteine 28, cysteine 18–cysteine 33, and cysteine 27–cysteine 39. Tryptophan 17 bears the 6'-bromotryptophan mark. Residue proline 23 is modified to 4-hydroxyproline. A 6'-bromotryptophan mark is found at tryptophan 37 and tryptophan 38. A 4-hydroxyproline modification is found at proline 40.

In terms of tissue distribution, expressed by the venom duct.

It localises to the secreted. Functionally, mu-conotoxins block voltage-gated sodium channels. This toxin reversibly blocks voltage-gated sodium channel in cephalopods, with no alteration in the voltage dependence of sodium conductance or on the kinetics of inactivation. The polypeptide is Mu-conotoxin-like Cal 12.1.2d (Californiconus californicus (California cone)).